A 219-amino-acid chain; its full sequence is Ras-related protein Rab-3 (219 aa).

GTP-binding positions include 29-37, 48-54, 77-81, 135-138, and 165-167; these read GNSSVGKTS, TSAFVST, DTAGQ, NKCD, and SAK. Positions 51–59 match the Effector region motif; it reads FVSTVGIDF. The tract at residues 191–219 is disordered; that stretch reads LDKDPQQQPKGQKLEANPTQKPAQQQCNC. A compositionally biased stretch (polar residues) spans 207–219; sequence NPTQKPAQQQCNC. Residues Cys-217 and Cys-219 are each lipidated (S-geranylgeranyl cysteine). The residue at position 219 (Cys-219) is a Cysteine methyl ester.

Belongs to the small GTPase superfamily. Rab family.

It localises to the cell membrane. Its function is as follows. Involved in exocytosis by regulating a late step in synaptic vesicle fusion. Could play a role in neurotransmitter release by regulating membrane flow in the nerve terminal. Plays a role in the recruitment of endophilin unc-57 to synaptic vesicles. Probably by controlling dense-core vesicle trafficking, plays a role in the AVG neuron-mediated formation of the right axon tract of the ventral nerve cord. In Caenorhabditis elegans, this protein is Ras-related protein Rab-3 (rab-3).